The sequence spans 69 residues: MIIPWQEIAPETLDNLIREFVLREGTDYGDIEVSLDEKIAQVRTQLQSGQAVIVYSELHETVDIKCHPF.

This sequence belongs to the UPF0270 family.

This Vibrio cholerae serotype O1 (strain M66-2) protein is UPF0270 protein VCM66_2532.